The sequence spans 427 residues: Trigger factor (427 aa).

Positions 160–240 constitute a PPIase FKBP-type domain; sequence TDTVIGDVEK…VKEVKRLELP (81 aa).

Belongs to the FKBP-type PPIase family. Tig subfamily.

The protein localises to the cytoplasm. It catalyses the reaction [protein]-peptidylproline (omega=180) = [protein]-peptidylproline (omega=0). In terms of biological role, involved in protein export. Acts as a chaperone by maintaining the newly synthesized protein in an open conformation. Functions as a peptidyl-prolyl cis-trans isomerase. This Chlorobium phaeobacteroides (strain DSM 266 / SMG 266 / 2430) protein is Trigger factor.